The following is a 79-amino-acid chain: Sec-independent protein translocase protein TatA (79 aa).

Residues 1 to 21 (MGSLSIWHWIVVIAVVLLLFG) form a helical membrane-spanning segment. Over residues 42–60 (GLQDDEKTAEKPDAVKSLD) the composition is skewed to basic and acidic residues. The segment at 42 to 79 (GLQDDEKTAEKPDAVKSLDHNATTGTPPNRTDVGSKAV) is disordered. Over residues 61–70 (HNATTGTPPN) the composition is skewed to polar residues.

Belongs to the TatA/E family. In terms of assembly, the Tat system comprises two distinct complexes: a TatABC complex, containing multiple copies of TatA, TatB and TatC subunits, and a separate TatA complex, containing only TatA subunits. Substrates initially bind to the TatABC complex, which probably triggers association of the separate TatA complex to form the active translocon.

The protein localises to the cell inner membrane. In terms of biological role, part of the twin-arginine translocation (Tat) system that transports large folded proteins containing a characteristic twin-arginine motif in their signal peptide across membranes. TatA could form the protein-conducting channel of the Tat system. The chain is Sec-independent protein translocase protein TatA from Rhodopseudomonas palustris (strain HaA2).